Reading from the N-terminus, the 820-residue chain is LPS-assembly protein LptD (820 aa).

Residues 1 to 27 (MDLSSLPDPLRPTHSRLPARRRDRAEP) form a disordered region. Residues 13 to 22 (THSRLPARRR) are compositionally biased toward basic residues.

This sequence belongs to the LptD family. As to quaternary structure, component of the lipopolysaccharide transport and assembly complex. Interacts with LptE and LptA.

In terms of biological role, together with LptE, is involved in the assembly of lipopolysaccharide (LPS) at the surface of the outer membrane. The polypeptide is LPS-assembly protein LptD (Paracidovorax citrulli (strain AAC00-1) (Acidovorax citrulli)).